A 375-amino-acid polypeptide reads, in one-letter code: DNA replication and repair protein RecF (375 aa).

30-37 (GENAQGKT) contacts ATP.

This sequence belongs to the RecF family.

Its subcellular location is the cytoplasm. The RecF protein is involved in DNA metabolism; it is required for DNA replication and normal SOS inducibility. RecF binds preferentially to single-stranded, linear DNA. It also seems to bind ATP. This chain is DNA replication and repair protein RecF, found in Bacillus cereus (strain G9842).